The sequence spans 218 residues: Small ribosomal subunit protein uS3c (218 aa).

The KH type-2 domain maps to 47–118 (VQKHMRVSSG…RLNIAITRVA (72 aa)).

This sequence belongs to the universal ribosomal protein uS3 family. As to quaternary structure, part of the 30S ribosomal subunit.

It localises to the plastid. The protein localises to the chloroplast. The protein is Small ribosomal subunit protein uS3c (rps3) of Illicium oligandrum (Star anise).